Consider the following 295-residue polypeptide: MSLKHFIQITKPGIIFGNVLSVAGGFFLASKGNIDFGVFLAAVIGTSLVVASGCVFNNCIDRDIDQRMERTRNRVLVQGLVSLKLALLYATILGVAGVALLYTEANPLAALFAVIGFVIYVGLYSLYLKRRSVHGTLVGSLSGAMPPVIGYCAVTNSFDFAALTLLVMFSLWQMPHSYAIAIFRFNDYRAAKIPVLPVKRGILVTKRHIMLYILAFLVATLMLTVGGYAGLNYLAVAAGMGMYWLYMAWKGYKAVDDTVWARKLFVFSIFTITALSVMMSVDFQVTKELLVTYAF.

9 helical membrane passes run 9-29 (ITKP…FFLA), 36-56 (FGVF…GCVF), 80-100 (LVSL…GVAL), 108-128 (LAAL…SLYL), 135-155 (GTLV…CAVT), 163-183 (LTLL…IAIF), 209-229 (IMLY…GGYA), 230-250 (GLNY…MAWK), and 265-285 (FVFS…DFQV).

The protein belongs to the UbiA prenyltransferase family. Protoheme IX farnesyltransferase subfamily.

The protein localises to the cell inner membrane. It carries out the reaction heme b + (2E,6E)-farnesyl diphosphate + H2O = Fe(II)-heme o + diphosphate. It participates in porphyrin-containing compound metabolism; heme O biosynthesis; heme O from protoheme: step 1/1. Converts heme B (protoheme IX) to heme O by substitution of the vinyl group on carbon 2 of heme B porphyrin ring with a hydroxyethyl farnesyl side group. This Pseudomonas savastanoi pv. phaseolicola (strain 1448A / Race 6) (Pseudomonas syringae pv. phaseolicola (strain 1448A / Race 6)) protein is Protoheme IX farnesyltransferase.